Reading from the N-terminus, the 542-residue chain is Sensory neuron membrane protein 2 (542 aa).

Residues 1-487 (MMVMNTELRQ…MKVLTLLDIV (487 aa)) lie on the Extracellular side of the membrane. Residues asparagine 33, asparagine 128, asparagine 238, and asparagine 274 are each glycosylated (N-linked (GlcNAc...) asparagine). 3 cysteine pairs are disulfide-bonded: cysteine 283/cysteine 351, cysteine 312/cysteine 378, and cysteine 353/cysteine 367. The helical transmembrane segment at 488 to 508 (QWVMIGSGLLLAIIMPIVYFI) threads the bilayer. At 509-542 (KRRPSSGSITPTLTTTTSTVSISDGGGLGGNPQK) the chain is on the cytoplasmic side.

Belongs to the CD36 family. As to expression, detected in the antenna, legs and wings. Higher levels of expression detected in male compared to female.

The protein resides in the cell membrane. In terms of biological role, plays an olfactory role that is not restricted to pheromone sensitivity. The polypeptide is Sensory neuron membrane protein 2 (Aedes aegypti (Yellowfever mosquito)).